The sequence spans 106 residues: ATP-dependent Clp protease adapter protein ClpS (106 aa).

It belongs to the ClpS family. In terms of assembly, binds to the N-terminal domain of the chaperone ClpA.

In terms of biological role, involved in the modulation of the specificity of the ClpAP-mediated ATP-dependent protein degradation. This Vibrio parahaemolyticus serotype O3:K6 (strain RIMD 2210633) protein is ATP-dependent Clp protease adapter protein ClpS.